We begin with the raw amino-acid sequence, 308 residues long: MSAQKPGLHPRNRHHSRYDLATLCQVNPELRQFLTLTPAGEQSVDFANPLAVKALNKALLAHFYAVANWDIPDGFLCPPVPGRADYIHHLADLLAEATGSIPANASILDIGVGANCIYPLIGVHEYGWRFTGSETSSQALSSAQAIISANPGLNRAIRLRRQKESGAIFNGIIHKNEQYDATLCNPPFHDSAAAARAGSERKRRNLGLNKDDVLNFGGQQQELWCEGGEVAFIKKMIEESKGFAKQVMWFTSLVSRGENLPPLYRALTDVGAVKVVKKEMAQGQKQSRFIAWTFMNDEQRRRFVNRQR.

It belongs to the methyltransferase superfamily. METTL16/RlmF family.

The protein localises to the cytoplasm. It carries out the reaction adenosine(1618) in 23S rRNA + S-adenosyl-L-methionine = N(6)-methyladenosine(1618) in 23S rRNA + S-adenosyl-L-homocysteine + H(+). Its function is as follows. Specifically methylates the adenine in position 1618 of 23S rRNA. This is Ribosomal RNA large subunit methyltransferase F from Escherichia coli O17:K52:H18 (strain UMN026 / ExPEC).